We begin with the raw amino-acid sequence, 1580 residues long: Dynamin-binding protein (1580 aa).

N-acetylmethionine is present on Met-1. 3 consecutive SH3 domains span residues 2 to 61 (EPGS…IVTI), 66 to 127 (EGER…ELCL), and 146 to 205 (YSLG…LLGP). Disordered regions lie at residues 211–245 (ESVNSRSGDDSAVNGEVDVPPEEAESGGDEDDQQS), 304–446 (NRTE…LVPL), 500–546 (YAQK…DSLD), and 589–688 (RGSS…AQTF). Acidic residues predominate over residues 229 to 243 (VPPEEAESGGDEDDQ). Positions 244-303 (QSGTYGIALYRFQALETNELDFEVGDRIQILGTLEDGWLEGCLKGKTGVFPHRFVKLCPS) constitute an SH3 4 domain. Composition is skewed to polar residues over residues 422-439 (QKSQHYLTAGGSHQTSDP) and 502-513 (QKHQTSTENTAS). Over residues 516-527 (DPPERPERRPGL) the composition is skewed to basic and acidic residues. Positions 608 to 617 (RPPPPRPRTP) are enriched in pro residues. Positions 671–682 (APEKEDSEHMEK) are enriched in basic and acidic residues. Ser-683 is modified (phosphoserine). The stretch at 694-755 (LARIRDVEQD…LELQQLRDMT (62 aa)) forms a coiled coil. The 188-residue stretch at 783–970 (KRAKVVAELL…KEINVNINEY (188 aa)) folds into the DH domain. The BAR domain occupies 1011–1220 (LKHLTGFAPQ…LKATDREGNL (210 aa)). One can recognise an SH3 5 domain in the interval 1288–1351 (PPEKLFHVQR…YSSFLKPYNP (64 aa)). Low complexity predominate over residues 1356–1365 (SDASVASHSS). Disordered stretches follow at residues 1356–1384 (SDASVASHSSTESEHSGSSPGCHRQNSHS) and 1426–1514 (TGHP…GSSE). Polar residues predominate over residues 1426–1440 (TGHPETGPSTCSSDP). An SH3 6 domain is found at 1516–1579 (EGNQVYFAIY…PSNYIRKTEY (64 aa)).

Binds DNM1 via its N-terminal SH3 domains. The C-terminal SH3 domain binds a complex containing actin, tubulin, Hsp70 and actin-regulatory proteins, such as ENAH, EVL, WIRE, CR16, WAVE1 and NAP1L1. Interacts with FASLG. Interacts (via SH3 domain 6) with WASL. Interacts (via SH3 domain 6) interacts with ENAH. Interacts (via C-terminal domain) with TJP1; required for the apical cell-cell junction localization of DNMBP.

It is found in the cytoplasm. It localises to the golgi apparatus. Its subcellular location is the golgi stack. The protein localises to the cytoskeleton. The protein resides in the synapse. It is found in the cell junction. In terms of biological role, plays a critical role as a guanine nucleotide exchange factor (GEF) for CDC42 in several intracellular processes associated with the actin and microtubule cytoskeleton. Regulates the structure of apical junctions in epithelial cells. Participates in the normal lumenogenesis of epithelial cell cysts by regulating spindle orientation. Plays a role in ciliogenesis. May play a role in membrane trafficking between the cell surface and the Golgi. The chain is Dynamin-binding protein from Mus musculus (Mouse).